Here is a 760-residue protein sequence, read N- to C-terminus: Xaa-Pro dipeptidyl-peptidase (760 aa).

Catalysis depends on charge relay system residues serine 349, aspartate 469, and histidine 499.

It belongs to the peptidase S15 family. As to quaternary structure, homodimer.

The protein localises to the cytoplasm. The enzyme catalyses Hydrolyzes Xaa-Pro-|- bonds to release unblocked, N-terminal dipeptides from substrates including Ala-Pro-|-p-nitroanilide and (sequentially) Tyr-Pro-|-Phe-Pro-|-Gly-Pro-|-Ile.. Its function is as follows. Removes N-terminal dipeptides sequentially from polypeptides having unsubstituted N-termini provided that the penultimate residue is proline. The polypeptide is Xaa-Pro dipeptidyl-peptidase (Streptococcus pyogenes serotype M3 (strain ATCC BAA-595 / MGAS315)).